The chain runs to 463 residues: Interleukin enhancer-binding factor 2 (463 aa).

Arg-94 carries the post-translational modification Asymmetric dimethylarginine; alternate. The residue at position 94 (Arg-94) is an Omega-N-methylarginine; alternate. One can recognise a DZF domain in the interval 108 to 444 (RHILAYDWLA…PEKKEGEEEE (337 aa)). Arg-145 carries the omega-N-methylarginine modification. A Glycyl lysine isopeptide (Lys-Gly) (interchain with G-Cter in ubiquitin) cross-link involves residue Lys-166. Residues Ser-173 and Ser-189 each carry the phosphoserine modification. Residues Lys-259 and Lys-437 each participate in a glycyl lysine isopeptide (Lys-Gly) (interchain with G-Cter in SUMO2) cross-link. Residues 424–463 (VTPSEKAYEKPPEKKEGEEEEENTEEPPQGEEEESMETQE) are disordered. Over residues 429-440 (KAYEKPPEKKEG) the composition is skewed to basic and acidic residues. A compositionally biased stretch (acidic residues) spans 441 to 463 (EEEEENTEEPPQGEEEESMETQE). A Phosphothreonine modification is found at Thr-461.

As to quaternary structure, forms heterodimers with ILF3. ILF2-ILF3 heterodimers may also bind to PRKDC/XRCC7: this may stabilize the interaction of PRKDC/XRCC7 and the heterodimeric complex of G22P1/KU70 and XRCC5/KU80. Forms a complex with ILF3, YLPM1, KHDRBS1, RBMX, NCOA5 and PPP1CA. Identified in a IGF2BP1-dependent mRNP granule complex containing untranslated mRNAs. Interacts with IGF2BP1. Interacts with CRBN; this interaction promotes ubiquitination and subsequent degradation of ILF2. In terms of processing, ubiquitinated at Lys-166 by CRBN with polyubiquitin chains by the CUL4-RING E3 ligase (CRL4-CRBN) and then degraded by the proteasome.

The protein resides in the nucleus. It is found in the nucleolus. Its subcellular location is the cytoplasm. In terms of biological role, chromatin-interacting protein that forms a stable heterodimer with interleukin enhancer-binding factor 3/ILF3 and plays a role in several biological processes including transcription, innate immunity or cell growth. Essential for the efficient reshuttling of ILF3 (isoform 1 and isoform 2) into the nucleus. Together with ILF3, forms an RNA-binding complex that is required for mitotic progression and cytokinesis by regulating the expression of a cluster of mitotic genes. Mechanistically, competes with STAU1/STAU2-mediated mRNA decay. Plays also a role in the inhibition of various viruses including Japanese encephalitis virus or enterovirus 71. The protein is Interleukin enhancer-binding factor 2 (Ilf2) of Rattus norvegicus (Rat).